The following is a 337-amino-acid chain: MKIYYDTDVNTDILKGKKIAIIGYGSQGHAHANNLKDSGFDVIVGVRKGKSWEKAENAGLTVMTVADASKMADIIMILTPDELQADLYKNEIEPNIKKGAFLAFAHGFNIHFGQIVPSSDINIFMVAPKGPGHLVRSEYLKGMGVPCLMAVHQDPSGITKDVALAYAVGIGGGRAGIIETTFKDETETDLFGEQVVLCGGLTALITAAYETLVEAGYPPELAYFECLHEVKLIADLIYEGGISTMRYSISNTAQYGDLTRGPRVINSSVKAEMKKILNEIQSGQFAKEWILECKVGKPTFNALTKQGEEHPIEKVGEKLRAMMPWLKSSKLVDKSKA.

Positions 1-180 (MKIYYDTDVN…GGGRAGIIET (180 aa)) constitute a KARI N-terminal Rossmann domain. NADP(+) contacts are provided by residues 24–27 (YGSQ), Arg-47, Ser-51, and 81–84 (DELQ). His-106 is a catalytic residue. Position 132 (Gly-132) interacts with NADP(+). One can recognise a KARI C-terminal knotted domain in the interval 181 to 326 (TFKDETETDL…EKLRAMMPWL (146 aa)). Mg(2+) is bound by residues Asp-189, Glu-193, Glu-225, and Glu-229. A substrate-binding site is contributed by Ser-250.

This sequence belongs to the ketol-acid reductoisomerase family. The cofactor is Mg(2+).

It carries out the reaction (2R)-2,3-dihydroxy-3-methylbutanoate + NADP(+) = (2S)-2-acetolactate + NADPH + H(+). The enzyme catalyses (2R,3R)-2,3-dihydroxy-3-methylpentanoate + NADP(+) = (S)-2-ethyl-2-hydroxy-3-oxobutanoate + NADPH + H(+). Its pathway is amino-acid biosynthesis; L-isoleucine biosynthesis; L-isoleucine from 2-oxobutanoate: step 2/4. The protein operates within amino-acid biosynthesis; L-valine biosynthesis; L-valine from pyruvate: step 2/4. Involved in the biosynthesis of branched-chain amino acids (BCAA). Catalyzes an alkyl-migration followed by a ketol-acid reduction of (S)-2-acetolactate (S2AL) to yield (R)-2,3-dihydroxy-isovalerate. In the isomerase reaction, S2AL is rearranged via a Mg-dependent methyl migration to produce 3-hydroxy-3-methyl-2-ketobutyrate (HMKB). In the reductase reaction, this 2-ketoacid undergoes a metal-dependent reduction by NADPH to yield (R)-2,3-dihydroxy-isovalerate. This is Ketol-acid reductoisomerase (NADP(+)) from Thermodesulfovibrio yellowstonii (strain ATCC 51303 / DSM 11347 / YP87).